Here is a 141-residue protein sequence, read N- to C-terminus: Small ribosomal subunit protein eS17w (141 aa).

It belongs to the eukaryotic ribosomal protein eS17 family.

This is Small ribosomal subunit protein eS17w (RPS17D) from Arabidopsis thaliana (Mouse-ear cress).